Reading from the N-terminus, the 235-residue chain is Peroxisomal membrane protein 11C (235 aa).

Topologically, residues Met-1–Lys-91 are cytoplasmic. Residues Asn-92–Gly-108 traverse the membrane as a helical segment. Residues Arg-109–Thr-206 lie on the Lumenal side of the membrane. The helical transmembrane segment at Pro-207–Leu-226 threads the bilayer. Over Pro-227–Val-235 the chain is Cytoplasmic.

This sequence belongs to the peroxin-11 family. As to quaternary structure, homooligomer. Interacts with ARC5 and FIS1B on peroxisomes. Expressed in roots and developing siliques.

Its subcellular location is the peroxisome membrane. In terms of biological role, involved in peroxisomal proliferation. Promotes peroxisomal duplication, aggregation or elongation without fission. The chain is Peroxisomal membrane protein 11C (PEX11C) from Arabidopsis thaliana (Mouse-ear cress).